Consider the following 431-residue polypeptide: Adenylosuccinate synthetase (431 aa).

GTP-binding positions include 12–18 (GDEGKGK) and 40–42 (GHT). The active-site Proton acceptor is the Asp13. Mg(2+)-binding residues include Asp13 and Gly40. IMP-binding positions include 13-16 (DEGK), 38-41 (NAGH), Thr131, Arg145, Gln225, Thr240, and Arg304. His41 acts as the Proton donor in catalysis. 300–306 (VNTGRPR) is a binding site for substrate. Residues Arg306, 332–334 (KLD), and 414–416 (STS) contribute to the GTP site.

Belongs to the adenylosuccinate synthetase family. As to quaternary structure, homodimer. It depends on Mg(2+) as a cofactor.

Its subcellular location is the cytoplasm. The enzyme catalyses IMP + L-aspartate + GTP = N(6)-(1,2-dicarboxyethyl)-AMP + GDP + phosphate + 2 H(+). It participates in purine metabolism; AMP biosynthesis via de novo pathway; AMP from IMP: step 1/2. Functionally, plays an important role in the de novo pathway of purine nucleotide biosynthesis. Catalyzes the first committed step in the biosynthesis of AMP from IMP. This chain is Adenylosuccinate synthetase, found in Rhizobium rhizogenes (strain K84 / ATCC BAA-868) (Agrobacterium radiobacter).